A 119-amino-acid polypeptide reads, in one-letter code: Large ribosomal subunit protein bL20c (119 aa).

The protein belongs to the bacterial ribosomal protein bL20 family.

The protein localises to the plastid. Its subcellular location is the chloroplast. Binds directly to 23S ribosomal RNA and is necessary for the in vitro assembly process of the 50S ribosomal subunit. It is not involved in the protein synthesizing functions of that subunit. The chain is Large ribosomal subunit protein bL20c from Saccharum officinarum (Sugarcane).